Reading from the N-terminus, the 101-residue chain is Phosphoprotein OPG062 (101 aa).

The interval 50–73 is disordered; that stretch reads KPSSPTCERRPSSPSRCERMNNPG. Basic and acidic residues predominate over residues 56 to 68; sequence CERRPSSPSRCER.

This sequence belongs to the orthopoxvirus OPG062 family. As to quaternary structure, self-associates to form high molecular-weight forms. Interacts with protein OPG157. Interacts with host RICTOR and RPTOR; these interactions disrupt the mTORC1 and mTORC2 crosstalk.

It localises to the virion. Functionally, plays an essential role in virion assembly and morphogenesis. Also plays a role in the inhibition of host immune response by dysregulating mTOR. Sequesters host RICTOR and RPTOR, thereby disrupting mTORC1 and mTORC2 crosstalk. In turn, blocks the host antiviral response in part through mTOR-dependent degradation of cGAS, the primary poxvirus sensor. In Monkeypox virus, this protein is Phosphoprotein OPG062 (OPG062).